A 596-amino-acid chain; its full sequence is Cis-3-hydroxy-L-proline dehydratase (596 aa).

The Proton acceptor role is filled by S67.

The protein belongs to the AcnX family. As to quaternary structure, monomer. Requires Fe(3+) as cofactor.

It catalyses the reaction cis-3-hydroxy-L-proline = 1-pyrroline-2-carboxylate + H2O. Its activity is regulated as follows. Inhibited by Zn(2+). Not inhibited by pyrrole-2-carboxylate nor its derivative 2-thiophenecarboxylate. Functionally, catalyzes the dehydration of cis-3-hydroxy-L-proline (c3LHyp) to Delta(1)-pyrroline-2-carboxylate (Pyr2C). No activity with L-proline, trans-4-hydroxy-L-proline (t4LHyp), cis-4-hydroxy-L-proline (c4LHyp), trans-3-hydroxy-L-proline (t3LHyp), D-proline, cis-4-hydroxy-D-proline (c4DHyp), trans-4-hydroxy-D-proline (t4DHyp) or L-serine as substrates. Because of the low catalytic efficiency, C3LHyp is likely not a main physiological substrate of this enzyme in H.jecorina. The chain is Cis-3-hydroxy-L-proline dehydratase from Hypocrea jecorina (strain QM6a) (Trichoderma reesei).